A 202-amino-acid polypeptide reads, in one-letter code: Acireductone dioxygenase (202 aa).

The Fe(2+) site is built by histidine 110, histidine 112, glutamate 116, and histidine 154. Ni(2+) is bound by residues histidine 110, histidine 112, glutamate 116, and histidine 154.

Belongs to the acireductone dioxygenase (ARD) family. Monomer. It depends on Fe(2+) as a cofactor. Requires Ni(2+) as cofactor.

The enzyme catalyses 1,2-dihydroxy-5-(methylsulfanyl)pent-1-en-3-one + O2 = 3-(methylsulfanyl)propanoate + CO + formate + 2 H(+). The catalysed reaction is 1,2-dihydroxy-5-(methylsulfanyl)pent-1-en-3-one + O2 = 4-methylsulfanyl-2-oxobutanoate + formate + 2 H(+). It functions in the pathway amino-acid biosynthesis; L-methionine biosynthesis via salvage pathway; L-methionine from S-methyl-5-thio-alpha-D-ribose 1-phosphate: step 5/6. Its function is as follows. Catalyzes 2 different reactions between oxygen and the acireductone 1,2-dihydroxy-3-keto-5-methylthiopentene (DHK-MTPene) depending upon the metal bound in the active site. Fe-containing acireductone dioxygenase (Fe-ARD) produces formate and 2-keto-4-methylthiobutyrate (KMTB), the alpha-ketoacid precursor of methionine in the methionine recycle pathway. Ni-containing acireductone dioxygenase (Ni-ARD) produces methylthiopropionate, carbon monoxide and formate, and does not lie on the methionine recycle pathway. The protein is Acireductone dioxygenase of Synechococcus sp. (strain CC9311).